The chain runs to 476 residues: MVDEVLKIESLDLEARGIARRDGKVVFVEGALPGERVYAATVRRKPSYEIARVETVLTPSSQRVEPRCPHFGVCGGCAMQHLEPTSQVAIKQRALEDTFWHVGKIRPQRVLPPLHGPTWGYRYRARLSVRVVPKKGGVLVGFHERKSSYVADMRECHVLPRHVSDLLLPLRAMIAALSRPERIPQIEVALGEGVTALVLRHIEPLNDHDITVLRDFAARHNVQWWLQSKGPDTVHPLDPAHGDTLAYTMPEFGLRMPYRPTDFTQVNHAINRSMVSRALKLLEVQPTDRVADLFCGLGNFTLPLATQGREAVGVEGSKALTDRALEAAARHGLEGRTRFATLNLFEVDVSWLRGLGYFDRMLIDPPREGAHAVAQALSQLTPAERPRRIVYVSCNPATLARDAAIMVHEGGYVLKAAGVINMFPHTGHVESIAVFESLADDEVLHVQQQARLKAELAAQEAAEATVQAGAASEQPA.

Residues 1–55 (MVDEVLKIESLDLEARGIARRDGKVVFVEGALPGERVYAATVRRKPSYEIARVET) enclose the TRAM domain. The [4Fe-4S] cluster site is built by Cys68, Cys74, Cys77, and Cys156. Positions 265, 294, 299, 315, 343, and 364 each coordinate S-adenosyl-L-methionine. Cys394 (nucleophile) is an active-site residue.

It belongs to the class I-like SAM-binding methyltransferase superfamily. RNA M5U methyltransferase family. RlmD subfamily.

The enzyme catalyses uridine(1939) in 23S rRNA + S-adenosyl-L-methionine = 5-methyluridine(1939) in 23S rRNA + S-adenosyl-L-homocysteine + H(+). Its function is as follows. Catalyzes the formation of 5-methyl-uridine at position 1939 (m5U1939) in 23S rRNA. In Bordetella avium (strain 197N), this protein is 23S rRNA (uracil(1939)-C(5))-methyltransferase RlmD.